Reading from the N-terminus, the 322-residue chain is Lipoyl synthase (322 aa).

A compositionally biased stretch (basic and acidic residues) spans 1–25 (MSQRITIDHRSAPALRHPEKAHRPD). The disordered stretch occupies residues 1-29 (MSQRITIDHRSAPALRHPEKAHRPDNPIQ). [4Fe-4S] cluster contacts are provided by cysteine 61, cysteine 66, cysteine 72, cysteine 87, cysteine 91, cysteine 94, and serine 300. One can recognise a Radical SAM core domain in the interval 73 to 289 (WSQRHATMMI…AAAARSKGFL (217 aa)).

It belongs to the radical SAM superfamily. Lipoyl synthase family. [4Fe-4S] cluster is required as a cofactor.

Its subcellular location is the cytoplasm. The catalysed reaction is [[Fe-S] cluster scaffold protein carrying a second [4Fe-4S](2+) cluster] + N(6)-octanoyl-L-lysyl-[protein] + 2 oxidized [2Fe-2S]-[ferredoxin] + 2 S-adenosyl-L-methionine + 4 H(+) = [[Fe-S] cluster scaffold protein] + N(6)-[(R)-dihydrolipoyl]-L-lysyl-[protein] + 4 Fe(3+) + 2 hydrogen sulfide + 2 5'-deoxyadenosine + 2 L-methionine + 2 reduced [2Fe-2S]-[ferredoxin]. The protein operates within protein modification; protein lipoylation via endogenous pathway; protein N(6)-(lipoyl)lysine from octanoyl-[acyl-carrier-protein]: step 2/2. Functionally, catalyzes the radical-mediated insertion of two sulfur atoms into the C-6 and C-8 positions of the octanoyl moiety bound to the lipoyl domains of lipoate-dependent enzymes, thereby converting the octanoylated domains into lipoylated derivatives. In Gluconobacter oxydans (strain 621H) (Gluconobacter suboxydans), this protein is Lipoyl synthase.